The sequence spans 209 residues: Small ribosomal subunit protein uS4 (209 aa).

A disordered region spans residues 22-45 (RGRNPLLRKPNPPGQHGMQRKKKS). The S4 RNA-binding domain occupies 93 to 154 (CRLDSIVYRL…KSKRLAIVTE (62 aa)).

It belongs to the universal ribosomal protein uS4 family. Part of the 30S ribosomal subunit. Contacts protein S5. The interaction surface between S4 and S5 is involved in control of translational fidelity.

In terms of biological role, one of the primary rRNA binding proteins, it binds directly to 16S rRNA where it nucleates assembly of the body of the 30S subunit. With S5 and S12 plays an important role in translational accuracy. The protein is Small ribosomal subunit protein uS4 of Chlamydia trachomatis serovar L2 (strain ATCC VR-902B / DSM 19102 / 434/Bu).